The sequence spans 75 residues: Alpha-amylase inhibitor Paim-2 (75 aa).

Cystine bridges form between C10–C26 and C44–C72.

Inhibits mammalian alpha-amylases specifically but has no action on plant and microbial alpha-amylases. The chain is Alpha-amylase inhibitor Paim-2 from Streptomyces olivaceoviridis (Streptomyces corchorusii).